Consider the following 499-residue polypeptide: Probable dipeptidase B (499 aa).

Cysteine 26 is a catalytic residue.

It belongs to the peptidase C69 family.

It carries out the reaction an L-aminoacyl-L-amino acid + H2O = 2 an L-alpha-amino acid. The chain is Probable dipeptidase B (pepDB) from Streptococcus pyogenes serotype M3 (strain ATCC BAA-595 / MGAS315).